Here is an 83-residue protein sequence, read N- to C-terminus: CLAVATA3/ESR (CLE)-related protein 20 (83 aa).

Residues M1–A29 form the signal peptide.

Belongs to the CLV3/ESR signal peptide family. As to expression, mostly expressed in roots, seedlings, leaves, flowers, stems and apex, and, to a lower extent, in siliques and pollen.

It is found in the secreted. The protein localises to the extracellular space. Its function is as follows. Extracellular signal peptide that regulates cell fate. Represses root apical meristem maintenance. Inhibits irreversibly root growth by reducing cell division rates in the root apical meristem. Regulates the transition of protophloem cells from proliferation to differentiation, thus impinging on postembryonic growth capacity of the root meristem; this signaling pathway requires CRN and CLV2. This is CLAVATA3/ESR (CLE)-related protein 20 from Arabidopsis thaliana (Mouse-ear cress).